A 246-amino-acid polypeptide reads, in one-letter code: Proteasome subunit alpha (246 aa).

This sequence belongs to the peptidase T1A family. In terms of assembly, the 20S proteasome core is composed of 14 alpha and 14 beta subunits that assemble into four stacked heptameric rings, resulting in a barrel-shaped structure. The two inner rings, each composed of seven catalytic beta subunits, are sandwiched by two outer rings, each composed of seven alpha subunits. The catalytic chamber with the active sites is on the inside of the barrel. Has a gated structure, the ends of the cylinder being occluded by the N-termini of the alpha-subunits. Is capped at one or both ends by the proteasome regulatory ATPase, PAN.

The protein localises to the cytoplasm. Its activity is regulated as follows. The formation of the proteasomal ATPase PAN-20S proteasome complex, via the docking of the C-termini of PAN into the intersubunit pockets in the alpha-rings, triggers opening of the gate for substrate entry. Interconversion between the open-gate and close-gate conformations leads to a dynamic regulation of the 20S proteasome proteolysis activity. Functionally, component of the proteasome core, a large protease complex with broad specificity involved in protein degradation. The chain is Proteasome subunit alpha from Methanopyrus kandleri (strain AV19 / DSM 6324 / JCM 9639 / NBRC 100938).